The sequence spans 357 residues: GDP-polyphosphate phosphotransferase (357 aa).

The interval 1 to 83 is disordered; sequence MSEEPTVSPP…DSTSASLPAN (83 aa). Positions 14–25 are enriched in low complexity; it reads QPAAQPAKPARP. Over residues 26–40 the composition is skewed to basic residues; it reads AARRAPRKPATRRPR.

Belongs to the polyphosphate kinase 2 (PPK2) family. Class I subfamily. As to quaternary structure, homotetramer. Also forms octamers. It depends on Mg(2+) as a cofactor. Mn(2+) is required as a cofactor.

It carries out the reaction [phosphate](n) + GTP = [phosphate](n+1) + GDP. The catalysed reaction is [phosphate](n) + ATP = [phosphate](n+1) + ADP. Uses inorganic polyphosphate (polyP) as a donor to convert GDP to GTP and ADP to ATP. Shows a preference for GDP. Can also catalyze the synthesis of polyP from GTP or ATP, but the rate of polyP utilization is 75-fold greater than the rate of polyP synthesis. In Pseudomonas aeruginosa (strain ATCC 15692 / DSM 22644 / CIP 104116 / JCM 14847 / LMG 12228 / 1C / PRS 101 / PAO1), this protein is GDP-polyphosphate phosphotransferase.